The sequence spans 301 residues: Putative ribosomal RNA methyltransferase PB17E12.10c (301 aa).

S-adenosyl-L-methionine is bound by residues Gly-87, Trp-89, Asp-107, and Asp-186. Lys-247 functions as the Proton acceptor in the catalytic mechanism.

The protein belongs to the class I-like SAM-binding methyltransferase superfamily. RNA methyltransferase RlmE family.

It carries out the reaction a uridine in rRNA + S-adenosyl-L-methionine = a 2'-O-methyluridine in rRNA + S-adenosyl-L-homocysteine + H(+). The protein is Putative ribosomal RNA methyltransferase PB17E12.10c of Schizosaccharomyces pombe (strain 972 / ATCC 24843) (Fission yeast).